We begin with the raw amino-acid sequence, 424 residues long: Riboflavin biosynthesis protein RibBA (424 aa).

The tract at residues 1–206 (MVTCEAGIAS…VDDLITYRWT (206 aa)) is DHBP synthase. D-ribulose 5-phosphate is bound by residues 32–33 (RE), Asp37, 145–149 (RPGHT), and Glu169. Glu33 provides a ligand contact to Mg(2+). His148 is a Mg(2+) binding site. Positions 207-424 (FDSLVEHVSS…YETVERTSCC (218 aa)) are GTP cyclohydrolase II. 257-261 (RVHSE) serves as a coordination point for GTP. Residues Cys262, Cys273, and Cys275 each coordinate Zn(2+). Residues Gln278, 301-303 (EGR), and Thr323 each bind GTP. Asp335 serves as the catalytic Proton acceptor; for GTP cyclohydrolase activity. The Nucleophile; for GTP cyclohydrolase activity role is filled by Arg337. Residues Thr358 and Lys363 each coordinate GTP.

This sequence in the N-terminal section; belongs to the DHBP synthase family. The protein in the C-terminal section; belongs to the GTP cyclohydrolase II family. The cofactor is Mg(2+). Mn(2+) serves as cofactor. Zn(2+) is required as a cofactor.

The catalysed reaction is D-ribulose 5-phosphate = (2S)-2-hydroxy-3-oxobutyl phosphate + formate + H(+). The enzyme catalyses GTP + 4 H2O = 2,5-diamino-6-hydroxy-4-(5-phosphoribosylamino)-pyrimidine + formate + 2 phosphate + 3 H(+). The protein operates within cofactor biosynthesis; riboflavin biosynthesis; 2-hydroxy-3-oxobutyl phosphate from D-ribulose 5-phosphate: step 1/1. It functions in the pathway cofactor biosynthesis; riboflavin biosynthesis; 5-amino-6-(D-ribitylamino)uracil from GTP: step 1/4. Functionally, catalyzes the conversion of D-ribulose 5-phosphate to formate and 3,4-dihydroxy-2-butanone 4-phosphate. In terms of biological role, catalyzes the conversion of GTP to 2,5-diamino-6-ribosylamino-4(3H)-pyrimidinone 5'-phosphate (DARP), formate and pyrophosphate. This Chlamydia muridarum (strain MoPn / Nigg) protein is Riboflavin biosynthesis protein RibBA.